The following is a 489-amino-acid chain: Probable cytochrome P450 CYP44 (489 aa).

The interval 12–31 is disordered; it reads VEKCPYSPTSSPNTPPRTFS. Low complexity predominate over residues 16 to 29; sequence PYSPTSSPNTPPRT. A heme-binding site is contributed by Cys438.

It belongs to the cytochrome P450 family. Heme serves as cofactor.

Cytochromes P450 are a group of heme-thiolate monooxygenases. They oxidize a variety of structurally unrelated compounds, including steroids, fatty acids, and xenobiotics. The protein is Probable cytochrome P450 CYP44 (cyp-44A1) of Caenorhabditis elegans.